We begin with the raw amino-acid sequence, 371 residues long: ATP-dependent protease ATP-binding subunit-like protein AmiB (371 aa).

96–103 contacts ATP; sequence GPTGVGKT.

It belongs to the ClpX chaperone family. Requires Mg(2+) as cofactor.

In terms of biological role, unlikely to encode a regulatory protein. Has ATPase activity. AmiB and AmiS may act jointly into a two component ABC transporter system. The chain is ATP-dependent protease ATP-binding subunit-like protein AmiB (amiB) from Pseudomonas aeruginosa (strain ATCC 15692 / DSM 22644 / CIP 104116 / JCM 14847 / LMG 12228 / 1C / PRS 101 / PAO1).